The sequence spans 347 residues: Isopentenyl-diphosphate delta-isomerase (347 aa).

A disordered region spans residues 1-31 (MDESNSQFEKRKRDHIRIALDPRSQTDGQNG). A compositionally biased stretch (basic and acidic residues) spans 8 to 20 (FEKRKRDHIRIAL). 11 to 12 (RK) lines the substrate pocket. FMN is bound by residues S72, 73–75 (SMT), S103, and N132. A substrate-binding site is contributed by 103–105 (SQR). A substrate-binding site is contributed by Q166. E167 contacts Mg(2+). Residues K198, S223, T228, 279–281 (GVR), and 300–301 (AK) each bind FMN.

It belongs to the IPP isomerase type 2 family. As to quaternary structure, homooctamer. Dimer of tetramers. FMN serves as cofactor. Requires NADPH as cofactor. It depends on Mg(2+) as a cofactor.

It is found in the cytoplasm. It carries out the reaction isopentenyl diphosphate = dimethylallyl diphosphate. In terms of biological role, involved in the biosynthesis of isoprenoids. Catalyzes the 1,3-allylic rearrangement of the homoallylic substrate isopentenyl (IPP) to its allylic isomer, dimethylallyl diphosphate (DMAPP). The chain is Isopentenyl-diphosphate delta-isomerase from Bdellovibrio bacteriovorus (strain ATCC 15356 / DSM 50701 / NCIMB 9529 / HD100).